A 560-amino-acid polypeptide reads, in one-letter code: Putative protease Do-like 11, mitochondrial (560 aa).

Residues methionine 1 to arginine 65 constitute a mitochondrion transit peptide. Residues threonine 117 to serine 302 form a serine protease region. Active-site charge relay system residues include histidine 150, aspartate 184, and serine 258. The PDZ domain maps to isoleucine 288–glutamate 384.

This sequence belongs to the peptidase S1C family.

The protein localises to the mitochondrion membrane. Putative serine protease. In Arabidopsis thaliana (Mouse-ear cress), this protein is Putative protease Do-like 11, mitochondrial (DEGP11).